Here is a 112-residue protein sequence, read N- to C-terminus: Putative transmembrane protein ORF112 (112 aa).

The next 3 helical transmembrane spans lie at 26–46, 50–70, and 80–100; these read FWEV…GILV, ILVT…MYLF, and IFFP…LVGV.

The protein resides in the host membrane. The protein is Putative transmembrane protein ORF112 of Acidianus convivator (ABV).